The chain runs to 513 residues: Histidine ammonia-lyase (513 aa).

A cross-link (5-imidazolinone (Ala-Gly)) is located at residues alanine 142 to glycine 144. 2,3-didehydroalanine (Ser) is present on serine 143.

This sequence belongs to the PAL/histidase family. In terms of processing, contains an active site 4-methylidene-imidazol-5-one (MIO), which is formed autocatalytically by cyclization and dehydration of residues Ala-Ser-Gly.

Its subcellular location is the cytoplasm. It carries out the reaction L-histidine = trans-urocanate + NH4(+). Its pathway is amino-acid degradation; L-histidine degradation into L-glutamate; N-formimidoyl-L-glutamate from L-histidine: step 1/3. In Roseobacter denitrificans (strain ATCC 33942 / OCh 114) (Erythrobacter sp. (strain OCh 114)), this protein is Histidine ammonia-lyase.